Consider the following 353-residue polypeptide: Small ribosomal subunit biogenesis GTPase RsgA (353 aa).

Over residues 1–17 (MSKNKLSKGQQRRVNAN) the composition is skewed to polar residues. The segment at 1–25 (MSKNKLSKGQQRRVNANHQRRLKTT) is disordered. Residues 104-274 (ASVLTRPDFY…VIDSPGVREF (171 aa)) form the CP-type G domain. GTP contacts are provided by residues 160–163 (NKID) and 214–222 (GQSGVGKSS). Cys-298, Cys-303, His-305, and Cys-311 together coordinate Zn(2+).

This sequence belongs to the TRAFAC class YlqF/YawG GTPase family. RsgA subfamily. Monomer. Associates with 30S ribosomal subunit, binds 16S rRNA. Requires Zn(2+) as cofactor.

It localises to the cytoplasm. One of several proteins that assist in the late maturation steps of the functional core of the 30S ribosomal subunit. Helps release RbfA from mature subunits. May play a role in the assembly of ribosomal proteins into the subunit. Circularly permuted GTPase that catalyzes slow GTP hydrolysis, GTPase activity is stimulated by the 30S ribosomal subunit. The polypeptide is Small ribosomal subunit biogenesis GTPase RsgA (Klebsiella pneumoniae (strain 342)).